The primary structure comprises 110 residues: UPF0060 membrane protein Psyr_3752 (110 aa).

4 helical membrane passes run leucine 5–leucine 25, glycine 28–leucine 48, alanine 59–glutamate 79, and leucine 84–glycine 104.

It belongs to the UPF0060 family.

It is found in the cell inner membrane. The sequence is that of UPF0060 membrane protein Psyr_3752 from Pseudomonas syringae pv. syringae (strain B728a).